A 211-amino-acid chain; its full sequence is Large ribosomal subunit protein eL13 (211 aa).

Lysine 16 bears the N6-acetyllysine mark. Phosphoserine is present on residues serine 52, serine 77, and serine 106. Residues lysine 123 and lysine 145 each participate in a glycyl lysine isopeptide (Lys-Gly) (interchain with G-Cter in SUMO2) cross-link. Residue lysine 174 forms a Glycyl lysine isopeptide (Lys-Gly) (interchain with G-Cter in SUMO1); alternate linkage. Residues lysine 174 and lysine 177 each participate in a glycyl lysine isopeptide (Lys-Gly) (interchain with G-Cter in SUMO2); alternate cross-link. Position 177 is an N6-acetyllysine; alternate (lysine 177).

It belongs to the eukaryotic ribosomal protein eL13 family. Component of the 60S large ribosomal subunit (LSU).

It is found in the cytoplasm. Its function is as follows. Component of the ribosome, a large ribonucleoprotein complex responsible for the synthesis of proteins in the cell. The small ribosomal subunit (SSU) binds messenger RNAs (mRNAs) and translates the encoded message by selecting cognate aminoacyl-transfer RNA (tRNA) molecules. The large subunit (LSU) contains the ribosomal catalytic site termed the peptidyl transferase center (PTC), which catalyzes the formation of peptide bonds, thereby polymerizing the amino acids delivered by tRNAs into a polypeptide chain. The nascent polypeptides leave the ribosome through a tunnel in the LSU and interact with protein factors that function in enzymatic processing, targeting, and the membrane insertion of nascent chains at the exit of the ribosomal tunnel. As part of the LSU, it is probably required for its formation and the maturation of rRNAs. Plays a role in bone development. The chain is Large ribosomal subunit protein eL13 (Rpl13) from Rattus norvegicus (Rat).